The chain runs to 102 residues: NADH-quinone oxidoreductase subunit K (102 aa).

3 helical membrane passes run 6–26 (MEHG…GLLI), 30–50 (LLYI…AFVV), and 65–85 (ILVI…LLLL).

It belongs to the complex I subunit 4L family. As to quaternary structure, NDH-1 is composed of 13 different subunits. Subunits NuoA, H, J, K, L, M, N constitute the membrane sector of the complex.

It localises to the cell inner membrane. It catalyses the reaction a quinone + NADH + 5 H(+)(in) = a quinol + NAD(+) + 4 H(+)(out). Functionally, NDH-1 shuttles electrons from NADH, via FMN and iron-sulfur (Fe-S) centers, to quinones in the respiratory chain. The immediate electron acceptor for the enzyme in this species is believed to be ubiquinone. Couples the redox reaction to proton translocation (for every two electrons transferred, four hydrogen ions are translocated across the cytoplasmic membrane), and thus conserves the redox energy in a proton gradient. The protein is NADH-quinone oxidoreductase subunit K of Shewanella oneidensis (strain ATCC 700550 / JCM 31522 / CIP 106686 / LMG 19005 / NCIMB 14063 / MR-1).